The following is an 872-amino-acid chain: FHIP family protein CBG19667 (872 aa).

Positions 800-841 are disordered; it reads SRSSPRSADEHDSTLFYGRSTIPPPGRKPLLREPSHQETLDD. Residues 829–841 are compositionally biased toward basic and acidic residues; that stretch reads LLREPSHQETLDD.

The protein belongs to the FHIP family.

In Caenorhabditis briggsae, this protein is FHIP family protein CBG19667.